Here is a 208-residue protein sequence, read N- to C-terminus: Peptidyl-tRNA hydrolase (208 aa).

Tyr19 is a binding site for tRNA. Catalysis depends on His24, which acts as the Proton acceptor. Residues Phe71, Asn73, and Asn119 each coordinate tRNA.

It belongs to the PTH family. In terms of assembly, monomer.

The protein localises to the cytoplasm. The catalysed reaction is an N-acyl-L-alpha-aminoacyl-tRNA + H2O = an N-acyl-L-amino acid + a tRNA + H(+). In terms of biological role, hydrolyzes ribosome-free peptidyl-tRNAs (with 1 or more amino acids incorporated), which drop off the ribosome during protein synthesis, or as a result of ribosome stalling. Its function is as follows. Catalyzes the release of premature peptidyl moieties from peptidyl-tRNA molecules trapped in stalled 50S ribosomal subunits, and thus maintains levels of free tRNAs and 50S ribosomes. The sequence is that of Peptidyl-tRNA hydrolase from Synechococcus elongatus (strain ATCC 33912 / PCC 7942 / FACHB-805) (Anacystis nidulans R2).